The chain runs to 377 residues: MSCIQTTFNEVLEKSLNHILDGIRPQIEAIDDAAFVAVTFAELTTLHLGGTPMAAVRCRSQHSVVEVVRLLDAHQIPLLIVGGGSNLVIADGEIPLVAVILDCDDISVTLDTGRVVAEAGAVWDDVVRLCVDAGLGGIECLSGIPGSAGATPVQNVGAYGAEISDVLVSVTLLERATGAVMEVPAADLELAYRYSNLKFTGRGVVLGITLQLHTDGMSAPLRFGELARVLGHEGPHPAVQVREAVLGLRAGKGMVYNEADHDTWSAGSFFTNPIVPESVGDHVRSVVGDESMPCFAAGEGMVKLSAAWLIDRAGFAKGHQGPGGRVSLSTKHTLALTNRGNATTDDLVALAREVRGGVMDAFGVLLEPEPVWVGVSI.

Residues 48–215 (LGGTPMAAVR…LGITLQLHTD (168 aa)) enclose the FAD-binding PCMH-type domain. R193 is a catalytic residue. The active-site Proton donor is the S268. The active site involves E369.

The protein belongs to the MurB family. The cofactor is FAD.

It localises to the cytoplasm. The catalysed reaction is UDP-N-acetyl-alpha-D-muramate + NADP(+) = UDP-N-acetyl-3-O-(1-carboxyvinyl)-alpha-D-glucosamine + NADPH + H(+). It functions in the pathway cell wall biogenesis; peptidoglycan biosynthesis. Functionally, cell wall formation. In Corynebacterium diphtheriae (strain ATCC 700971 / NCTC 13129 / Biotype gravis), this protein is UDP-N-acetylenolpyruvoylglucosamine reductase.